A 195-amino-acid chain; its full sequence is Peptidyl-tRNA hydrolase (195 aa).

Tyrosine 17 contacts tRNA. The active-site Proton acceptor is the histidine 22. TRNA is bound by residues phenylalanine 68, asparagine 70, and asparagine 116.

This sequence belongs to the PTH family. Monomer.

The protein localises to the cytoplasm. It carries out the reaction an N-acyl-L-alpha-aminoacyl-tRNA + H2O = an N-acyl-L-amino acid + a tRNA + H(+). Functionally, hydrolyzes ribosome-free peptidyl-tRNAs (with 1 or more amino acids incorporated), which drop off the ribosome during protein synthesis, or as a result of ribosome stalling. Its function is as follows. Catalyzes the release of premature peptidyl moieties from peptidyl-tRNA molecules trapped in stalled 50S ribosomal subunits, and thus maintains levels of free tRNAs and 50S ribosomes. The chain is Peptidyl-tRNA hydrolase from Shewanella amazonensis (strain ATCC BAA-1098 / SB2B).